A 237-amino-acid polypeptide reads, in one-letter code: Phosphoribosylaminoimidazole-succinocarboxamide synthase (237 aa).

Belongs to the SAICAR synthetase family.

It catalyses the reaction 5-amino-1-(5-phospho-D-ribosyl)imidazole-4-carboxylate + L-aspartate + ATP = (2S)-2-[5-amino-1-(5-phospho-beta-D-ribosyl)imidazole-4-carboxamido]succinate + ADP + phosphate + 2 H(+). The protein operates within purine metabolism; IMP biosynthesis via de novo pathway; 5-amino-1-(5-phospho-D-ribosyl)imidazole-4-carboxamide from 5-amino-1-(5-phospho-D-ribosyl)imidazole-4-carboxylate: step 1/2. This chain is Phosphoribosylaminoimidazole-succinocarboxamide synthase, found in Shigella boydii serotype 4 (strain Sb227).